We begin with the raw amino-acid sequence, 397 residues long: Elongation factor Tu (397 aa).

Positions 10-207 (KPHVNIGTIG…ACDSYIPEPQ (198 aa)) constitute a tr-type G domain. A G1 region spans residues 19–26 (GHIDHGKT). Residue 19–26 (GHIDHGKT) participates in GTP binding. Residue Thr26 participates in Mg(2+) binding. Residues 60 to 64 (GITIA) form a G2 region. The interval 81–84 (DCPG) is G3. GTP-binding positions include 81–85 (DCPGH) and 136–139 (NKCD). The G4 stretch occupies residues 136–139 (NKCD). Residues 174 to 176 (SAL) are G5.

It belongs to the TRAFAC class translation factor GTPase superfamily. Classic translation factor GTPase family. EF-Tu/EF-1A subfamily. Monomer.

The protein resides in the cytoplasm. The catalysed reaction is GTP + H2O = GDP + phosphate + H(+). Functionally, GTP hydrolase that promotes the GTP-dependent binding of aminoacyl-tRNA to the A-site of ribosomes during protein biosynthesis. The chain is Elongation factor Tu from Nitratidesulfovibrio vulgaris (strain ATCC 29579 / DSM 644 / CCUG 34227 / NCIMB 8303 / VKM B-1760 / Hildenborough) (Desulfovibrio vulgaris).